We begin with the raw amino-acid sequence, 130 residues long: Ribonuclease P protein component (130 aa).

It belongs to the RnpA family. In terms of assembly, consists of a catalytic RNA component (M1 or rnpB) and a protein subunit.

It carries out the reaction Endonucleolytic cleavage of RNA, removing 5'-extranucleotides from tRNA precursor.. RNaseP catalyzes the removal of the 5'-leader sequence from pre-tRNA to produce the mature 5'-terminus. It can also cleave other RNA substrates such as 4.5S RNA. The protein component plays an auxiliary but essential role in vivo by binding to the 5'-leader sequence and broadening the substrate specificity of the ribozyme. In Azotobacter vinelandii (strain DJ / ATCC BAA-1303), this protein is Ribonuclease P protein component.